The primary structure comprises 311 residues: tRNA-cytidine(32) 2-sulfurtransferase (311 aa).

The PP-loop motif signature appears at 47–52 (SGGKDS). The [4Fe-4S] cluster site is built by Cys122, Cys125, and Cys213.

Belongs to the TtcA family. Homodimer. It depends on Mg(2+) as a cofactor. [4Fe-4S] cluster serves as cofactor.

It is found in the cytoplasm. The enzyme catalyses cytidine(32) in tRNA + S-sulfanyl-L-cysteinyl-[cysteine desulfurase] + AH2 + ATP = 2-thiocytidine(32) in tRNA + L-cysteinyl-[cysteine desulfurase] + A + AMP + diphosphate + H(+). Its pathway is tRNA modification. Catalyzes the ATP-dependent 2-thiolation of cytidine in position 32 of tRNA, to form 2-thiocytidine (s(2)C32). The sulfur atoms are provided by the cysteine/cysteine desulfurase (IscS) system. The protein is tRNA-cytidine(32) 2-sulfurtransferase of Klebsiella pneumoniae (strain 342).